Consider the following 440-residue polypeptide: 23S rRNA (uracil(1939)-C(5))-methyltransferase RlmD (440 aa).

In terms of domain architecture, TRAM spans 8 to 69 (PQKINKLQRE…RQFGLATTKK (62 aa)). [4Fe-4S] cluster contacts are provided by Cys-82, Cys-88, Cys-91, and Cys-169. Residues Gln-272, Phe-301, Asn-306, Glu-322, Asp-349, and Asp-370 each contribute to the S-adenosyl-L-methionine site. The active-site Nucleophile is Cys-396.

This sequence belongs to the class I-like SAM-binding methyltransferase superfamily. RNA M5U methyltransferase family. RlmD subfamily.

The catalysed reaction is uridine(1939) in 23S rRNA + S-adenosyl-L-methionine = 5-methyluridine(1939) in 23S rRNA + S-adenosyl-L-homocysteine + H(+). Its function is as follows. Catalyzes the formation of 5-methyl-uridine at position 1939 (m5U1939) in 23S rRNA. The polypeptide is 23S rRNA (uracil(1939)-C(5))-methyltransferase RlmD (Mannheimia succiniciproducens (strain KCTC 0769BP / MBEL55E)).